A 177-amino-acid polypeptide reads, in one-letter code: uncharacterized protein (177 aa).

A disordered region spans residues 1-27 (MSHSRRAAPTQDQCHTPGFPTSRETSG).

This is an uncharacterized protein from Homo sapiens (Human).